The chain runs to 324 residues: tRNA dimethylallyltransferase (324 aa).

17–24 contributes to the ATP binding site; that stretch reads GPTASGKT. Position 19-24 (19-24) interacts with substrate; the sequence is TASGKT. 3 interaction with substrate tRNA regions span residues 42-45, 166-170, and 251-256; these read DSAL, QRIQR, and RCVGYR.

Belongs to the IPP transferase family. As to quaternary structure, monomer. Mg(2+) is required as a cofactor.

It carries out the reaction adenosine(37) in tRNA + dimethylallyl diphosphate = N(6)-dimethylallyladenosine(37) in tRNA + diphosphate. Catalyzes the transfer of a dimethylallyl group onto the adenine at position 37 in tRNAs that read codons beginning with uridine, leading to the formation of N6-(dimethylallyl)adenosine (i(6)A). The protein is tRNA dimethylallyltransferase of Burkholderia pseudomallei (strain 1106a).